The primary structure comprises 441 residues: Trigger factor (441 aa).

A PPIase FKBP-type domain is found at 161–246 (GDMVTVDFQG…VKDVKERILA (86 aa)).

Belongs to the FKBP-type PPIase family. Tig subfamily.

The protein resides in the cytoplasm. The enzyme catalyses [protein]-peptidylproline (omega=180) = [protein]-peptidylproline (omega=0). Its function is as follows. Involved in protein export. Acts as a chaperone by maintaining the newly synthesized protein in an open conformation. Functions as a peptidyl-prolyl cis-trans isomerase. In Desulfotalea psychrophila (strain LSv54 / DSM 12343), this protein is Trigger factor.